The following is a 737-amino-acid chain: Dynein axonemal intermediate chain 7 homolog (737 aa).

Polar residues predominate over residues 1–15 (MPPKSPNRSGKSTPT). Disordered stretches follow at residues 1-61 (MPPK…ERRA), 274-362 (KKVK…DDEE), and 410-452 (STVK…QQPP). 3 stretches are compositionally biased toward basic and acidic residues: residues 18-61 (RPGE…ERRA), 276-316 (VKDE…EGRQ), and 333-349 (EETK…DAVK). Composition is skewed to polar residues over residues 417-429 (DNPN…SRVA) and 441-451 (PSKTPLEQQQP).

This sequence belongs to the DNAI7 family.

This Ciona intestinalis (Transparent sea squirt) protein is Dynein axonemal intermediate chain 7 homolog (AXP83.9).